The chain runs to 197 residues: uncharacterized protein (197 aa).

4 helical membrane passes run 12–41 (LCIF…WVLF), 78–100 (LIQG…TALS), 120–142 (VGVF…FGCV), and 162–184 (IRFA…IFRS).

Its subcellular location is the cell membrane. This is an uncharacterized protein from Treponema pallidum (strain Nichols).